A 428-amino-acid polypeptide reads, in one-letter code: Histone deacetylase 3 (428 aa).

Residues 3-316 are histone deacetylase; it reads KTVAYFYDPD…WTYETSLLVE (314 aa). 1D-myo-inositol 1,4,5,6-tetrakisphosphate-binding residues include H17, G21, and K25. The active site involves H135. 3 residues coordinate Zn(2+): D170, H172, and D259. A 1D-myo-inositol 1,4,5,6-tetrakisphosphate-binding site is contributed by R265. 2 stretches are compositionally biased toward basic and acidic residues: residues 388–405 and 415–428; these read DRTD…ENYS and DGDH…DVEI. Residues 388–428 are disordered; sequence DRTDEADAEERGPEENYSRPEAPNEFYDGDHDNDKESDVEI. Position 424 is a phosphoserine (S424).

The protein belongs to the histone deacetylase family. HD type 1 subfamily. In terms of assembly, interacts with HDAC7 and HDAC9. Interacts with DAXX, KDM4A, HDAC10 and DACH1. Found in a complex with NCOR1 and NCOR2. Component of the N-Cor repressor complex, at least composed of NCOR1, NCOR2, HDAC3, TBL1X, TBL1R, CORO2A and GPS2. Interacts with BCOR, MJD2A/JHDM3A, NRIP1, PRDM6 and SRY. Interacts with BTBD14B. Interacts with GLIS2. Interacts (via the DNA-binding domain) with NR2C1; the interaction recruits phosphorylated NR2C1 to PML bodies for sumoylation. Component of the Notch corepressor complex. Interacts with CBFA2T3 and NKAP. Interacts with APEX1; the interaction is not dependent on the acetylated status of APEX1. Interacts with ZMYND15. Interacts with SMRT/NCOR2 and BCL6 on DNA enhancer elements. Interacts with INSM1. Interacts with XBP1 isoform 1; the interaction occurs in endothelial cell (EC) under disturbed flow. Interacts (via C-terminus) with CCAR2 (via N-terminus). Interacts with and deacetylates MEF2D. Interacts with BEND3. Interacts with NKAPL. Interacts with DHX36; this interaction occurs in a RNA-dependent manner. Interacts weakly with CRY1; this interaction is enhanced in the presence of FBXL3. Interacts with FBXL3 and BMAL1. Interacts with NCOR1. Interacts with RARA. Interacts with SETD5. (Microbial infection) Interacts with human cytomegalovirus (HHV-5) immediate early protein IE1; this interaction decreases histone acetylation and allows transcriptional activation by the virus. The cofactor is Zn(2+). Post-translationally, sumoylated in vitro. Deubiquitinated on 'Lys-63'-linked ubiquitin chains by USP38; leading to a decreased level of histone acetylation. Widely expressed.

The protein localises to the nucleus. Its subcellular location is the chromosome. It localises to the cytoplasm. It is found in the cytosol. It carries out the reaction N(6)-acetyl-L-lysyl-[histone] + H2O = L-lysyl-[histone] + acetate. It catalyses the reaction N(6)-acetyl-L-lysyl-[protein] + H2O = L-lysyl-[protein] + acetate. The enzyme catalyses N(6)-(2E)-butenoyl-L-lysyl-[protein] + H2O = (2E)-2-butenoate + L-lysyl-[protein]. The catalysed reaction is N(6)-(2-hydroxyisobutanoyl)-L-lysyl-[protein] + H2O = 2-hydroxy-2-methylpropanoate + L-lysyl-[protein]. It carries out the reaction N(6)-[(S)-lactoyl]-L-lysyl-[protein] + H2O = (S)-lactate + L-lysyl-[protein]. With respect to regulation, inositol tetraphosphate (1D-myo-inositol 1,4,5,6-tetrakisphosphate) promotes the histone deacetylase activity by acting as an intermolecular glue between HDAC3 and NCOR2, thereby promoting its association with the N-Cor complex, a prerequisite for the histone deacetylase activity. In terms of biological role, histone deacetylase that catalyzes the deacetylation of lysine residues on the N-terminal part of the core histones (H2A, H2B, H3 and H4), and some other non-histone substrates. Histone deacetylation gives a tag for epigenetic repression and plays an important role in transcriptional regulation, cell cycle progression and developmental events. Histone deacetylases act via the formation of large multiprotein complexes, such as N-Cor repressor complex, which activate the histone deacetylase activity. Participates in the BCL6 transcriptional repressor activity by deacetylating the H3 'Lys-27' (H3K27) on enhancer elements, antagonizing EP300 acetyltransferase activity and repressing proximal gene expression. Acts as a molecular chaperone for shuttling phosphorylated NR2C1 to PML bodies for sumoylation. Contributes, together with XBP1 isoform 1, to the activation of NFE2L2-mediated HMOX1 transcription factor gene expression in a PI(3)K/mTORC2/Akt-dependent signaling pathway leading to endothelial cell (EC) survival under disturbed flow/oxidative stress. Regulates both the transcriptional activation and repression phases of the circadian clock in a deacetylase activity-independent manner. During the activation phase, promotes the accumulation of ubiquitinated BMAL1 at the E-boxes and during the repression phase, blocks FBXL3-mediated CRY1/2 ubiquitination and promotes the interaction of CRY1 and BMAL1. The NCOR1-HDAC3 complex regulates the circadian expression of the core clock gene BMAL1 and the genes involved in lipid metabolism in the liver. Also functions as a deacetylase for non-histone targets, such as KAT5, MEF2D, MAPK14, RARA and STAT3. Serves as a corepressor of RARA, mediating its deacetylation and repression, leading to inhibition of RARE DNA element binding. In association with RARA, plays a role in the repression of microRNA-10a and thereby in the inflammatory response. In addition to protein deacetylase activity, also acts as a protein-lysine deacylase by recognizing other acyl groups: catalyzes removal of (2E)-butenoyl (crotonyl), lactoyl (lactyl) and 2-hydroxyisobutanoyl (2-hydroxyisobutyryl) acyl groups from lysine residues, leading to protein decrotonylation, delactylation and de-2-hydroxyisobutyrylation, respectively. Catalyzes decrotonylation of MAPRE1/EB1. Mediates delactylation NBN/NBS1, thereby inhibiting DNA double-strand breaks (DSBs) via homologous recombination (HR). This chain is Histone deacetylase 3 (HDAC3), found in Homo sapiens (Human).